The chain runs to 263 residues: 3-deoxy-manno-octulosonate cytidylyltransferase (263 aa).

Belongs to the KdsB family.

The protein localises to the cytoplasm. It carries out the reaction 3-deoxy-alpha-D-manno-oct-2-ulosonate + CTP = CMP-3-deoxy-beta-D-manno-octulosonate + diphosphate. It participates in nucleotide-sugar biosynthesis; CMP-3-deoxy-D-manno-octulosonate biosynthesis; CMP-3-deoxy-D-manno-octulosonate from 3-deoxy-D-manno-octulosonate and CTP: step 1/1. It functions in the pathway bacterial outer membrane biogenesis; lipopolysaccharide biosynthesis. Functionally, activates KDO (a required 8-carbon sugar) for incorporation into bacterial lipopolysaccharide in Gram-negative bacteria. The polypeptide is 3-deoxy-manno-octulosonate cytidylyltransferase (Burkholderia cenocepacia (strain ATCC BAA-245 / DSM 16553 / LMG 16656 / NCTC 13227 / J2315 / CF5610) (Burkholderia cepacia (strain J2315))).